The following is a 498-amino-acid chain: Probable malate:quinone oxidoreductase 2 (498 aa).

The protein belongs to the MQO family. Requires FAD as cofactor.

The catalysed reaction is (S)-malate + a quinone = a quinol + oxaloacetate. It functions in the pathway carbohydrate metabolism; tricarboxylic acid cycle; oxaloacetate from (S)-malate (quinone route): step 1/1. In Staphylococcus epidermidis (strain ATCC 35984 / DSM 28319 / BCRC 17069 / CCUG 31568 / BM 3577 / RP62A), this protein is Probable malate:quinone oxidoreductase 2.